The chain runs to 211 residues: Molybdenum cofactor guanylyltransferase (211 aa).

GTP contacts are provided by residues 12–14, lysine 25, asparagine 53, aspartate 71, and aspartate 101; that span reads LAG. Aspartate 101 provides a ligand contact to Mg(2+).

The protein belongs to the MobA family. As to quaternary structure, monomer. Mg(2+) serves as cofactor.

It localises to the cytoplasm. It catalyses the reaction Mo-molybdopterin + GTP + H(+) = Mo-molybdopterin guanine dinucleotide + diphosphate. In terms of biological role, transfers a GMP moiety from GTP to Mo-molybdopterin (Mo-MPT) cofactor (Moco or molybdenum cofactor) to form Mo-molybdopterin guanine dinucleotide (Mo-MGD) cofactor. This chain is Molybdenum cofactor guanylyltransferase, found in Acidovorax sp. (strain JS42).